Here is a 1044-residue protein sequence, read N- to C-terminus: MSDWRLTENVLDQNIPETKPRESKTRLEEIQRLALFQEELDIIEELDDPVDVWYRCIEWLLETRFLGMETVNKMLDDAIQYLERCRFALNDVRHLLIQLAKIKQSYETPDELQQAAKQFYQLASKGIGLELALFYEEYGSLLIRMQRWKEASEVFHAAVSREARPLVRLLRNAAEFSRAYDLHNAHPSIHDAPYSSPFPPPRIVLGSKPVSSSTLPSKPKSFQVFSDASSSRDSQNASDLPQAKSLESEANTPNLPLLYDKSSGKRVEYSAFNFLALYENGEERSMEECRAQRYLSSIQPNTAASFPKVVPKNEISVHHDSSSSNVSPIYKNPVAEQSDTPTRSLPKNYAYVAKSTSPELKVFDTVMPVALSPKPAQKPPSPTIHTKAALADILDIFNQPLRSESLEKSSKSPISAQSSYLGTPLKNDENSSNSGATSLTGRSQEEHLDFIPSLTPSKNYPSKIYSPNKNLDFSHTASKAETYKNSNELENVKREQPFSELLPSTLQEETATGTTSTTFANAKRRPEDSNISPTNPKKLHTLPRSPQYSTVDSNSVLSPAMPKGYMFVNENQSMKHESSVSNPVATIPHENGKHDFGQLSPIEHKPFFPKNDDELPGPSGYLTMPYEEAMASLSNLPTLINPLDQSLRDLLFQVLRPSLLRDKDYHEHETSFALVEHIESFVSKIKPKAGGPGRRRSSNRHSLDGPEFHLFYPPNTNLSVISKLGQGAFAPVYLVKSKIETENGDVSQGGAENNESKLFALKIETPPSCFEFYLTRQAMTRLKGLRETNSILPVHQLHMFHDTSHLLMDYRPQGSILDLVNSMHNSTFSSSGMDEILVVFFSIEFLRIIEALHTHKIIHGDLKADNALLRLETVADSEWSPIYSPEGLYGWSFKGIYLIDFGRGIDLSLFEEKVKFIADWDTDLQDCIEMREGRPWTYQIDYHGLAAIIYTMLFGQYIETRIEVINGQRRQVLTQRMKRYWNQDLWHRLFDLLLNPTLHVSEENLPMTEELSKIRIEMEEWLVNHSTGGSGLKGLLKSIEKRKI.

The BUB1 N-terminal domain occupies 36-204; the sequence is FQEELDIIEE…SSPFPPPRIV (169 aa). Disordered stretches follow at residues 209 to 259, 317 to 343, 404 to 446, 484 to 555, and 685 to 705; these read PVSS…PLLY, VHHD…TPTR, ESLE…SQEE, KNSN…DSNS, and IKPK…SLDG. A compositionally biased stretch (polar residues) spans 223–239; the sequence is QVFSDASSSRDSQNASD. Over residues 430–442 the composition is skewed to polar residues; that stretch reads NSSNSGATSLTGR. Low complexity predominate over residues 504–518; the sequence is STLQEETATGTTSTT. Polar residues predominate over residues 544–555; sequence RSPQYSTVDSNS. The residue at position 550 (Thr550) is a Phosphothreonine. A Protein kinase domain is found at 718–1044; that stretch reads LSVISKLGQG…LLKSIEKRKI (327 aa). Residues Ala728, Phe729, Ala730, Lys762, and Asp809 each coordinate ATP. The active-site Proton acceptor is the Asp861. 3 residues coordinate ATP: Asp865, Asn866, and Asp900.

This sequence belongs to the protein kinase superfamily. Ser/Thr protein kinase family. BUB1 subfamily. Part of the BUB1-BUB3 complex, composed of bub1 and bub3. Interacts with spc7 (when phosphorylated on MELT motifs); to recruit the bub1-bub3 complex to kinetochores. Interacts with mad3. In terms of processing, autophosphorylated.

It is found in the nucleus. Its subcellular location is the chromosome. It localises to the centromere. The protein localises to the kinetochore. The enzyme catalyses L-seryl-[protein] + ATP = O-phospho-L-seryl-[protein] + ADP + H(+). The catalysed reaction is L-threonyl-[protein] + ATP = O-phospho-L-threonyl-[protein] + ADP + H(+). Functionally, involved in mitotic spindle assembly checkpoint signaling, a process that delays anaphase until chromosomes are bioriented on the spindle, and in the repair of incorrect mitotic kinetochore-spindle microtubule attachments. Acts as a kinetochore scaffold for the recruitment of other spindle assembly checkpoint components. In Schizosaccharomyces pombe (strain 972 / ATCC 24843) (Fission yeast), this protein is Spindle assembly checkpoint serine/threonine-protein kinase bub1.